Consider the following 944-residue polypeptide: Probable UDP-N-acetylglucosamine--peptide N-acetylglucosaminyltransferase SPINDLY (944 aa).

TPR repeat units follow at residues 34–67 (GTDALRYANILRSRNKFADALQLYTTVLDKDGAN), 68–101 (VEALIGKGICLQAQSLPRQALDCFTEAVKVDPKN), 102–135 (ACALTHCGMIYKDEGHLVEAAEAYQKARSADPSY), 143–176 (AIVLTDLGTSLKLAGNTEDGIQKYCEALEVDSHY), 177–210 (APAYYNLGVVYSEMMQFDVALTCYEKAALERPLY), 211–244 (AEAYCNMGVIYKNRGELDAAIACYDRCLTISPNF), 252–285 (AIALTDLGTKVKIEGDINQGVAYYKKALFYNWHY), 286–319 (ADAMYNLGVAYGEMLNFEMAIVFYELALHFNPRC), 320–353 (AEACNNLGVIYKDRDNLDKAVECYQMALSIKPNF), 355–387 (QSLNNLGVVYTVQGKMDAAASMIEKAILANPTY), and 388–421 (AEAYNNLGVLYRDAGSITLSVQAYERCLQIDPDS). The interval 422 to 944 (RNAGQNRLLA…RCEANGHSSR (523 aa)) is catalytic region. The disordered stretch occupies residues 873-944 (NATAEEDNQS…RCEANGHSSR (72 aa)). Residues 897–911 (PQPQIMVNGVTSPEG) show a composition bias toward polar residues.

The protein belongs to the glycosyltransferase 41 family. O-GlcNAc transferase subfamily. As to expression, expressed in all parts of plants, including immature leaf blade, leaf sheath, mature leaf blade, roots, germinating embryos and aleurone layers.

It is found in the nucleus. The catalysed reaction is L-seryl-[protein] + UDP-N-acetyl-alpha-D-glucosamine = 3-O-(N-acetyl-beta-D-glucosaminyl)-L-seryl-[protein] + UDP + H(+). The enzyme catalyses L-threonyl-[protein] + UDP-N-acetyl-alpha-D-glucosamine = 3-O-(N-acetyl-beta-D-glucosaminyl)-L-threonyl-[protein] + UDP + H(+). It functions in the pathway protein modification; protein glycosylation. Probable O-linked N-acetylglucosamine transferase (OGT) involved in various processes such as gibberellin (GA) signaling pathway. OGTs catalyze the addition of nucleotide-activated sugars directly onto the polypeptide through O-glycosidic linkage with the hydroxyl of serine or threonine. Probably acts by adding O-linked sugars to yet unknown proteins. This Hordeum vulgare (Barley) protein is Probable UDP-N-acetylglucosamine--peptide N-acetylglucosaminyltransferase SPINDLY (SPY).